We begin with the raw amino-acid sequence, 308 residues long: Coenzyme PQQ synthesis protein B (308 aa).

This sequence belongs to the PqqB family.

It functions in the pathway cofactor biosynthesis; pyrroloquinoline quinone biosynthesis. Functionally, may be involved in the transport of PQQ or its precursor to the periplasm. This is Coenzyme PQQ synthesis protein B from Rhodopseudomonas palustris (strain BisB5).